The sequence spans 372 residues: Embryonic growth/differentiation factor 1 (372 aa).

A signal peptide spans 1-29 (MPPPQQGPCGHHLLLLLALLLPSLPLTRA). A propeptide spanning residues 30–253 (PVPPGPAAAL…LCHPLARPRR (224 aa)) is cleaved from the precursor. Residues 67-86 (RRRDPQETRSGSRRTSPGVT) form a disordered region. Asparagine 206 is a glycosylation site (N-linked (GlcNAc...) asparagine). 3 disulfides stabilise this stretch: cysteine 267-cysteine 337, cysteine 296-cysteine 369, and cysteine 300-cysteine 371.

It belongs to the TGF-beta family. In terms of assembly, homodimer; disulfide-linked. As to expression, expressed in the brain.

It is found in the secreted. Its function is as follows. May mediate cell differentiation events during embryonic development. This is Embryonic growth/differentiation factor 1 (GDF1) from Homo sapiens (Human).